The chain runs to 252 residues: 2,5-diamino-6-ribosylamino-4(3H)-pyrimidinone 5'-phosphate reductase (252 aa).

Residues threonine 80, aspartate 84, valine 166, and 189–193 (GGIVI) each bind NADP(+).

This sequence belongs to the HTP reductase family. Homodimer.

The catalysed reaction is 2,5-diamino-6-(1-D-ribitylamino)pyrimidin-4(3H)-one 5'-phosphate + NADP(+) = 2,5-diamino-6-(1-D-ribosylamino)pyrimidin-4(3H)-one 5'-phosphate + NADPH + H(+). It catalyses the reaction 2,5-diamino-6-(1-D-ribitylamino)pyrimidin-4(3H)-one 5'-phosphate + NAD(+) = 2,5-diamino-6-(1-D-ribosylamino)pyrimidin-4(3H)-one 5'-phosphate + NADH + H(+). It functions in the pathway cofactor biosynthesis; riboflavin biosynthesis. Its function is as follows. Catalyzes an early step in riboflavin biosynthesis, the NADPH-dependent reduction of the ribose side chain of 2,5-diamino-6-ribosylamino-4(3H)-pyrimidinone 5'-phosphate, yielding 2,5-diamino-6-ribitylamino-4(3H)-pyrimidinone 5'-phosphate. The chain is 2,5-diamino-6-ribosylamino-4(3H)-pyrimidinone 5'-phosphate reductase (RIB7) from Kluyveromyces lactis (strain ATCC 8585 / CBS 2359 / DSM 70799 / NBRC 1267 / NRRL Y-1140 / WM37) (Yeast).